The primary structure comprises 258 residues: MAPITEEAVSGLKDIIGKLEARVEELESRLSNGFKPKSVAEHMRMVLMGPPGAGKGTQAPALKDKYCVCHLATGDMLRSQVAKKTELGKEAKKIMDQGGLVSDEIMVNMIKSELDNNSECKNGFILDGFPRTVAQAERLDDMLAARQQKLQHAVELQIDDALLVARITGRLVHPASGRSYHKVFNPPKQEMKDDITGEPLIQRSDDNAETLKKRLGTYHAQTAPVVDYYKKTGIWRGIDASQEPGQVWKSLLGVFQQN.

Residue 52-57 participates in ATP binding; it reads GAGKGT. An NMP region spans residues 72–101; sequence ATGDMLRSQVAKKTELGKEAKKIMDQGGLV. Residues Thr73, Arg78, 99–101, 128–131, and Gln135 contribute to the AMP site; these read GLV and GFPR. The tract at residues 169 to 206 is LID; the sequence is GRLVHPASGRSYHKVFNPPKQEMKDDITGEPLIQRSDD. ATP contacts are provided by residues Arg170 and 179 to 180; that span reads SY. 2 residues coordinate AMP: Arg203 and Arg214. Gln242 provides a ligand contact to ATP.

Belongs to the adenylate kinase family. AK2 subfamily. In terms of assembly, monomer.

It is found in the cytoplasm. It localises to the cytosol. The protein localises to the mitochondrion intermembrane space. The enzyme catalyses AMP + ATP = 2 ADP. Catalyzes the reversible transfer of the terminal phosphate group between ATP and AMP. Plays an important role in cellular energy homeostasis and in adenine nucleotide metabolism. Adenylate kinase activity is critical for regulation of the phosphate utilization and the AMP de novo biosynthesis pathways. The polypeptide is Adenylate kinase (adk1) (Aspergillus oryzae (strain ATCC 42149 / RIB 40) (Yellow koji mold)).